We begin with the raw amino-acid sequence, 292 residues long: Porphobilinogen deaminase (292 aa).

Cys235 is modified (S-(dipyrrolylmethanemethyl)cysteine).

Belongs to the HMBS family. As to quaternary structure, monomer. It depends on dipyrromethane as a cofactor.

It catalyses the reaction 4 porphobilinogen + H2O = hydroxymethylbilane + 4 NH4(+). It functions in the pathway porphyrin-containing compound metabolism; protoporphyrin-IX biosynthesis; coproporphyrinogen-III from 5-aminolevulinate: step 2/4. Functionally, tetrapolymerization of the monopyrrole PBG into the hydroxymethylbilane pre-uroporphyrinogen in several discrete steps. The polypeptide is Porphobilinogen deaminase (Acetivibrio thermocellus (strain ATCC 27405 / DSM 1237 / JCM 9322 / NBRC 103400 / NCIMB 10682 / NRRL B-4536 / VPI 7372) (Clostridium thermocellum)).